A 279-amino-acid chain; its full sequence is MYIVETKDLYFRYPDGTAVLKGINFKVKKGEMVSLLGPNGAGKSTLFLHFNGILRPTKGEVLIKGKPIKYDKKSLVEVRKTVGLVFQNPDDQIFAPTVKEDVAFGPLNLGLPKEEVEKRVKEALKAVGMEGFENKPPHHLSGGQKKRVAIAGILAMQPEVIVLDEPTAGLDPVGASKIMKLLYDLNKKGMTIIISTHDVDLVPVYADKVYVMYDGKILKEGTPKEVFSDVETIRKANLRLPRVAHLIEILNKKDNIPIEWGFTIGEVRRNIVNYLKEKC.

The ABC transporter domain maps to 4-239; it reads VETKDLYFRY…VETIRKANLR (236 aa). Residue 37 to 44 participates in ATP binding; sequence GPNGAGKS.

It belongs to the ABC transporter superfamily. Energy-coupling factor EcfA family. As to quaternary structure, forms a stable energy-coupling factor (ECF) transporter complex composed of 2 membrane-embedded substrate-binding proteins (S component), 2 ATP-binding proteins (A component) and 2 transmembrane proteins (T component).

It is found in the cell membrane. In terms of biological role, ATP-binding (A) component of a common energy-coupling factor (ECF) ABC-transporter complex. Unlike classic ABC transporters this ECF transporter provides the energy necessary to transport a number of different substrates. In Methanocaldococcus jannaschii (strain ATCC 43067 / DSM 2661 / JAL-1 / JCM 10045 / NBRC 100440) (Methanococcus jannaschii), this protein is Energy-coupling factor transporter ATP-binding protein EcfA.